We begin with the raw amino-acid sequence, 284 residues long: NAD kinase (284 aa).

D60 (proton acceptor) is an active-site residue. Residues D60 to G61, N134 to E135, R145, K162, D164, T175 to S180, and Q234 contribute to the NAD(+) site.

This sequence belongs to the NAD kinase family. It depends on a divalent metal cation as a cofactor.

The protein resides in the cytoplasm. It catalyses the reaction NAD(+) + ATP = ADP + NADP(+) + H(+). Involved in the regulation of the intracellular balance of NAD and NADP, and is a key enzyme in the biosynthesis of NADP. Catalyzes specifically the phosphorylation on 2'-hydroxyl of the adenosine moiety of NAD to yield NADP. The chain is NAD kinase from Clostridium botulinum (strain Alaska E43 / Type E3).